The primary structure comprises 394 residues: Elongation factor Tu (394 aa).

In terms of domain architecture, tr-type G spans 10-204 (KPHVNVGTIG…HLDTYIPEPE (195 aa)). Residues 19–26 (GHVDHGKT) are G1. 19–26 (GHVDHGKT) contributes to the GTP binding site. Thr-26 is a binding site for Mg(2+). The interval 60-64 (GITIN) is G2. The tract at residues 81–84 (DCPG) is G3. Residues 81 to 85 (DCPGH) and 136 to 139 (NKCD) contribute to the GTP site. The G4 stretch occupies residues 136-139 (NKCD). The segment at 174-176 (SAL) is G5.

It belongs to the TRAFAC class translation factor GTPase superfamily. Classic translation factor GTPase family. EF-Tu/EF-1A subfamily. Monomer.

The protein resides in the cytoplasm. It carries out the reaction GTP + H2O = GDP + phosphate + H(+). GTP hydrolase that promotes the GTP-dependent binding of aminoacyl-tRNA to the A-site of ribosomes during protein biosynthesis. The sequence is that of Elongation factor Tu from Actinobacillus pleuropneumoniae serotype 5b (strain L20).